The following is a 388-amino-acid chain: Chorismate synthase (388 aa).

NADP(+) is bound by residues Arg-39 and Arg-45. Residues 132–134 (RSS), 251–252 (NA), Gly-296, 311–315 (KPIPT), and Arg-337 contribute to the FMN site.

Belongs to the chorismate synthase family. As to quaternary structure, homotetramer. FMNH2 serves as cofactor.

The catalysed reaction is 5-O-(1-carboxyvinyl)-3-phosphoshikimate = chorismate + phosphate. It participates in metabolic intermediate biosynthesis; chorismate biosynthesis; chorismate from D-erythrose 4-phosphate and phosphoenolpyruvate: step 7/7. Its function is as follows. Catalyzes the anti-1,4-elimination of the C-3 phosphate and the C-6 proR hydrogen from 5-enolpyruvylshikimate-3-phosphate (EPSP) to yield chorismate, which is the branch point compound that serves as the starting substrate for the three terminal pathways of aromatic amino acid biosynthesis. This reaction introduces a second double bond into the aromatic ring system. This Staphylococcus aureus (strain Mu50 / ATCC 700699) protein is Chorismate synthase.